Consider the following 584-residue polypeptide: Protein BONZAI 3 (584 aa).

A disordered region spans residues 1–23 (MGGCLSGDVKGGKQAIGGVQQRP). Gly2 carries N-myristoyl glycine lipidation. C2 domains follow at residues 34-167 (HNDA…TLTL) and 178-305 (NRNL…NFVY). Residues Asp67, Asp73, Asp126, Asp128, and Asp145 each contribute to the Ca(2+) site. Residues 344-563 (NFMVAVDFTA…SVVQALLEEL (220 aa)) enclose the VWFA domain.

The protein belongs to the copine family. Interacts with BAP1 and BAP2. Requires Ca(2+) as cofactor. Expressed at an extremely low level.

It is found in the cell membrane. Its function is as follows. Negative regulator of cell death and defense responses. Repress a number of R genes and may have effects in promoting growth and development. May function in membrane trafficking and in fusion of vesicles with plasma membrane. The protein is Protein BONZAI 3 (BON3) of Arabidopsis thaliana (Mouse-ear cress).